Here is a 253-residue protein sequence, read N- to C-terminus: Triosephosphate isomerase (253 aa).

Position 9 to 11 (9 to 11 (NWK)) interacts with substrate. The active-site Electrophile is His-94. Glu-163 functions as the Proton acceptor in the catalytic mechanism. Substrate-binding positions include Gly-169, Ser-209, and 230-231 (GG).

This sequence belongs to the triosephosphate isomerase family. As to quaternary structure, homodimer.

It is found in the cytoplasm. It catalyses the reaction D-glyceraldehyde 3-phosphate = dihydroxyacetone phosphate. Its pathway is carbohydrate biosynthesis; gluconeogenesis. It participates in carbohydrate degradation; glycolysis; D-glyceraldehyde 3-phosphate from glycerone phosphate: step 1/1. In terms of biological role, involved in the gluconeogenesis. Catalyzes stereospecifically the conversion of dihydroxyacetone phosphate (DHAP) to D-glyceraldehyde-3-phosphate (G3P). This Dehalococcoides mccartyi (strain ATCC BAA-2100 / JCM 16839 / KCTC 5957 / BAV1) protein is Triosephosphate isomerase.